A 1069-amino-acid polypeptide reads, in one-letter code: Carbamoyl phosphate synthase large chain (1069 aa).

Residues 1–401 form a carboxyphosphate synthetic domain region; it reads MPLNKDIKKV…AFLKGIRSLE (401 aa). Positions 129, 169, 175, 176, 208, 210, 215, 241, 242, 243, 284, and 298 each coordinate ATP. In terms of domain architecture, ATP-grasp 1 spans 133 to 327; sequence RDMMNRIGEP…IAKLAAKIAL (195 aa). Gln-284, Glu-298, and Asn-300 together coordinate Mg(2+). Mn(2+) contacts are provided by Gln-284, Glu-298, and Asn-300. The oligomerization domain stretch occupies residues 402-549; that stretch reads IGKYSLDHKK…YSTYEQYDEV (148 aa). The carbamoyl phosphate synthetic domain stretch occupies residues 550-932; it reads EVSNRRKVIV…ALYKGFVGAN (383 aa). In terms of domain architecture, ATP-grasp 2 spans 674–864; the sequence is DELLERLDIS…IVDIATQVMM (191 aa). ATP contacts are provided by Arg-710, Lys-749, Leu-751, Glu-755, Gly-780, Val-781, His-782, Ser-783, Gln-823, and Glu-835. Residues Gln-823, Glu-835, and Asn-837 each coordinate Mg(2+). Mn(2+) contacts are provided by Gln-823, Glu-835, and Asn-837. The region spanning 932–1069 is the MGS-like domain; sequence NMYPSKEKGK…KDLEVFDITK (138 aa). Positions 933-1069 are allosteric domain; that stretch reads MYPSKEKGKI…KDLEVFDITK (137 aa).

It belongs to the CarB family. Composed of two chains; the small (or glutamine) chain promotes the hydrolysis of glutamine to ammonia, which is used by the large (or ammonia) chain to synthesize carbamoyl phosphate. Tetramer of heterodimers (alpha,beta)4. The cofactor is Mg(2+). Requires Mn(2+) as cofactor.

The catalysed reaction is hydrogencarbonate + L-glutamine + 2 ATP + H2O = carbamoyl phosphate + L-glutamate + 2 ADP + phosphate + 2 H(+). It carries out the reaction hydrogencarbonate + NH4(+) + 2 ATP = carbamoyl phosphate + 2 ADP + phosphate + 2 H(+). It functions in the pathway amino-acid biosynthesis; L-arginine biosynthesis; carbamoyl phosphate from bicarbonate: step 1/1. Its pathway is pyrimidine metabolism; UMP biosynthesis via de novo pathway; (S)-dihydroorotate from bicarbonate: step 1/3. Large subunit of the glutamine-dependent carbamoyl phosphate synthetase (CPSase). CPSase catalyzes the formation of carbamoyl phosphate from the ammonia moiety of glutamine, carbonate, and phosphate donated by ATP, constituting the first step of 2 biosynthetic pathways, one leading to arginine and/or urea and the other to pyrimidine nucleotides. The large subunit (synthetase) binds the substrates ammonia (free or transferred from glutamine from the small subunit), hydrogencarbonate and ATP and carries out an ATP-coupled ligase reaction, activating hydrogencarbonate by forming carboxy phosphate which reacts with ammonia to form carbamoyl phosphate. This chain is Carbamoyl phosphate synthase large chain, found in Clostridium botulinum (strain Eklund 17B / Type B).